Here is a 167-residue protein sequence, read N- to C-terminus: Signal peptidase complex subunit 2 (167 aa).

At 1 to 36 (MPKYNVSDFKSKFDKELTNHFNKNGYKQSFVFEDIR) the chain is on the cytoplasmic side. Residues 37–57 (LLIAIACIIPAGLAFGIEYVY) form a helical membrane-spanning segment. At 58–68 (GFGVLKSYLKY) the chain is on the lumenal side. A helical membrane pass occupies residues 69–89 (LLPLYFLASCLLTFWSSVVKG). Residues 90–167 (STVYVATKKE…ISKYLSQIEN (78 aa)) lie on the Cytoplasmic side of the membrane.

This sequence belongs to the SPCS2 family. As to quaternary structure, component of the signal peptidase complex (SPC) composed of a catalytic subunit sec11 and three accessory subunits spc1, spc2 and spc3. The complex induces a local thinning of the ER membrane which is used to measure the length of the signal peptide (SP) h-region of protein substrates. This ensures the selectivity of the complex towards h-regions shorter than 18-20 amino acids. SPC associates with the translocon complex.

Its subcellular location is the endoplasmic reticulum membrane. Functionally, component of the signal peptidase complex (SPC) which catalyzes the cleavage of N-terminal signal sequences from nascent proteins as they are translocated into the lumen of the endoplasmic reticulum. Enhances the enzymatic activity of SPC and facilitates the interactions between different components of the translocation site. This chain is Signal peptidase complex subunit 2 (spc2), found in Schizosaccharomyces pombe (strain 972 / ATCC 24843) (Fission yeast).